The primary structure comprises 592 residues: V-type ATP synthase alpha chain (592 aa).

Residue Gly232–Thr239 participates in ATP binding.

This sequence belongs to the ATPase alpha/beta chains family.

It catalyses the reaction ATP + H2O + 4 H(+)(in) = ADP + phosphate + 5 H(+)(out). Produces ATP from ADP in the presence of a proton gradient across the membrane. The V-type alpha chain is a catalytic subunit. The sequence is that of V-type ATP synthase alpha chain from Clostridium botulinum (strain Alaska E43 / Type E3).